Here is an 81-residue protein sequence, read N- to C-terminus: Cytotoxin 8 (81 aa).

Residues 1-21 form the signal peptide; it reads MKTLLLTLVVVTIVCLDLGYT. Disulfide bonds link Cys24–Cys42, Cys35–Cys59, Cys63–Cys74, and Cys75–Cys80.

The protein belongs to the three-finger toxin family. Short-chain subfamily. Type IA cytotoxin sub-subfamily. Monomer in solution; Homodimer and oligomer in the presence of negatively charged lipids forming a pore with a size ranging between 20 and 30 Angstroms. As to expression, expressed by the venom gland.

Its subcellular location is the secreted. The protein localises to the target cell membrane. Functionally, shows cytolytic activity on many different cells by forming pore in lipid membranes. In vivo, increases heart rate or kills the animal by cardiac arrest. In addition, it binds to heparin with high affinity, interacts with Kv channel-interacting protein 1 (KCNIP1) in a calcium-independent manner, and binds to integrin alpha-V/beta-3 (ITGAV/ITGB3) with moderate affinity. The protein is Cytotoxin 8 of Naja atra (Chinese cobra).